A 1359-amino-acid chain; its full sequence is DNA-directed RNA polymerase subunit beta (1359 aa).

Belongs to the RNA polymerase beta chain family. The RNAP catalytic core consists of 2 alpha, 1 beta, 1 beta' and 1 omega subunit. When a sigma factor is associated with the core the holoenzyme is formed, which can initiate transcription.

It catalyses the reaction RNA(n) + a ribonucleoside 5'-triphosphate = RNA(n+1) + diphosphate. In terms of biological role, DNA-dependent RNA polymerase catalyzes the transcription of DNA into RNA using the four ribonucleoside triphosphates as substrates. This chain is DNA-directed RNA polymerase subunit beta, found in Nitrosomonas eutropha (strain DSM 101675 / C91 / Nm57).